We begin with the raw amino-acid sequence, 432 residues long: Homogentisate 1,2-dioxygenase (432 aa).

H287 acts as the Proton acceptor in catalysis. Residues H330 and E336 each coordinate Fe cation. Positions 345 and 366 each coordinate homogentisate. H366 provides a ligand contact to Fe cation.

It belongs to the homogentisate dioxygenase family. As to quaternary structure, hexamer; dimer of trimers. It depends on Fe cation as a cofactor.

It carries out the reaction homogentisate + O2 = 4-maleylacetoacetate + H(+). It functions in the pathway amino-acid degradation; L-phenylalanine degradation; acetoacetate and fumarate from L-phenylalanine: step 4/6. Involved in the catabolism of homogentisate (2,5-dihydroxyphenylacetate or 2,5-OH-PhAc), a central intermediate in the degradation of phenylalanine and tyrosine. Catalyzes the oxidative ring cleavage of the aromatic ring of homogentisate to yield maleylacetoacetate. The chain is Homogentisate 1,2-dioxygenase from Pseudomonas aeruginosa (strain UCBPP-PA14).